A 428-amino-acid polypeptide reads, in one-letter code: Gamma-glutamyl phosphate reductase (428 aa).

This sequence belongs to the gamma-glutamyl phosphate reductase family.

It localises to the cytoplasm. It carries out the reaction L-glutamate 5-semialdehyde + phosphate + NADP(+) = L-glutamyl 5-phosphate + NADPH + H(+). It functions in the pathway amino-acid biosynthesis; L-proline biosynthesis; L-glutamate 5-semialdehyde from L-glutamate: step 2/2. Catalyzes the NADPH-dependent reduction of L-glutamate 5-phosphate into L-glutamate 5-semialdehyde and phosphate. The product spontaneously undergoes cyclization to form 1-pyrroline-5-carboxylate. This Hyphomonas neptunium (strain ATCC 15444) protein is Gamma-glutamyl phosphate reductase.